The following is a 328-amino-acid chain: L-lactate dehydrogenase (328 aa).

NAD(+)-binding positions include Val-18, Glu-39, Lys-46, Tyr-71, and 85-86 (GA). Substrate is bound by residues Gln-88 and Arg-94. NAD(+) is bound by residues Ser-107, 124–126 (AAN), and Ser-149. 126–129 (NPVD) provides a ligand contact to substrate. 154 to 157 (DSAR) lines the substrate pocket. Residues Arg-159 and His-174 each coordinate beta-D-fructose 1,6-bisphosphate. His-181 functions as the Proton acceptor in the catalytic mechanism. Tyr-226 bears the Phosphotyrosine mark. Thr-235 serves as a coordination point for substrate.

The protein belongs to the LDH/MDH superfamily. LDH family. In terms of assembly, homotetramer.

It is found in the cytoplasm. The catalysed reaction is (S)-lactate + NAD(+) = pyruvate + NADH + H(+). Its pathway is fermentation; pyruvate fermentation to lactate; (S)-lactate from pyruvate: step 1/1. With respect to regulation, allosterically activated by fructose 1,6-bisphosphate (FBP). In terms of biological role, catalyzes the conversion of lactate to pyruvate. The chain is L-lactate dehydrogenase from Streptococcus pneumoniae (strain ATCC BAA-255 / R6).